Here is a 247-residue protein sequence, read N- to C-terminus: MNPLLILTFVAAALAAPFDDDDKIVGGYNCEENSVPYQVSLNSGYHFCGGSLINEQWVVSAGHCYKSRIQVRLGEHNIEVLEGNEQFINAAKIIRHPQYDRKTLNNDIMLIKLSSRAVINARVSTISLPTAPPATGTKCLISGWGNTASSGADYPDELQCLDAPVLSQAKCEASYPGKITSNMFCVGFLEGGKDSCQGDSGGPVVCNGQLQGVVSWGDGCAQKNKPGVYTKVYNYVKWIKNTIAANS.

A signal peptide spans 1–15 (MNPLLILTFVAAALA). A propeptide spans 16-23 (APFDDDDK) (activation peptide). A Peptidase S1 domain is found at 24 to 244 (IVGGYNCEEN…YVKWIKNTIA (221 aa)). Disulfide bonds link C30/C160, C48/C64, C139/C206, C171/C185, and C196/C220. H63 acts as the Charge relay system in catalysis. The Ca(2+) site is built by E75, N77, V80, and E85. Residue D107 is the Charge relay system of the active site. A Sulfotyrosine modification is found at Y154. The active-site Charge relay system is S200.

Belongs to the peptidase S1 family. In terms of assembly, interacts with SERPINA1. Ca(2+) serves as cofactor. Post-translationally, occurs in a single-chain form and a two-chain form, produced by proteolytic cleavage after Arg-122. Sulfation at Tyr-154 increases selectivity towards basic versus apolar residues at the P2' position of inhibitors that bind in a substrate-like fashion. Although the increase in selectivity is relatively small, it may facilitate digestion of a broader range of dietary proteins.

The protein localises to the secreted. The protein resides in the extracellular space. It catalyses the reaction Preferential cleavage: Arg-|-Xaa, Lys-|-Xaa.. In terms of biological role, has activity against the synthetic substrates Boc-Phe-Ser-Arg-Mec, Boc-Leu-Thr-Arg-Mec, Boc-Gln-Ala-Arg-Mec and Boc-Val-Pro-Arg-Mec. The single-chain form is more active than the two-chain form against all of these substrates. In Homo sapiens (Human), this protein is Serine protease 1.